The following is a 296-amino-acid chain: Homoserine kinase (296 aa).

84-94 contributes to the ATP binding site; sequence PLARGLGSSSS.

The protein belongs to the GHMP kinase family. Homoserine kinase subfamily.

The protein localises to the cytoplasm. It carries out the reaction L-homoserine + ATP = O-phospho-L-homoserine + ADP + H(+). It functions in the pathway amino-acid biosynthesis; L-threonine biosynthesis; L-threonine from L-aspartate: step 4/5. Functionally, catalyzes the ATP-dependent phosphorylation of L-homoserine to L-homoserine phosphate. The protein is Homoserine kinase of Lactococcus lactis subsp. lactis (strain IL1403) (Streptococcus lactis).